The primary structure comprises 209 residues: Uracil phosphoribosyltransferase (209 aa).

Residues arginine 79, arginine 104, and 131–139 each bind 5-phospho-alpha-D-ribose 1-diphosphate; that span reads DPMLATGGS. Uracil-binding positions include isoleucine 194 and 199–201; that span reads GDA. Aspartate 200 serves as a coordination point for 5-phospho-alpha-D-ribose 1-diphosphate.

The protein belongs to the UPRTase family. Mg(2+) serves as cofactor.

It catalyses the reaction UMP + diphosphate = 5-phospho-alpha-D-ribose 1-diphosphate + uracil. The protein operates within pyrimidine metabolism; UMP biosynthesis via salvage pathway; UMP from uracil: step 1/1. Its activity is regulated as follows. Allosterically activated by GTP. In terms of biological role, catalyzes the conversion of uracil and 5-phospho-alpha-D-ribose 1-diphosphate (PRPP) to UMP and diphosphate. The chain is Uracil phosphoribosyltransferase from Chromohalobacter salexigens (strain ATCC BAA-138 / DSM 3043 / CIP 106854 / NCIMB 13768 / 1H11).